Consider the following 357-residue polypeptide: Glycerol-3-phosphate dehydrogenase [NAD(P)+] (357 aa).

NADPH contacts are provided by serine 30, phenylalanine 31, arginine 51, and lysine 124. Sn-glycerol 3-phosphate is bound by residues lysine 124 and glycine 152. Alanine 156 is an NADPH binding site. 5 residues coordinate sn-glycerol 3-phosphate: lysine 207, aspartate 260, serine 270, arginine 271, and asparagine 272. Lysine 207 functions as the Proton acceptor in the catalytic mechanism. Arginine 271 is an NADPH binding site. NADPH is bound at residue glutamate 297.

It belongs to the NAD-dependent glycerol-3-phosphate dehydrogenase family.

The protein localises to the cytoplasm. It carries out the reaction sn-glycerol 3-phosphate + NAD(+) = dihydroxyacetone phosphate + NADH + H(+). The catalysed reaction is sn-glycerol 3-phosphate + NADP(+) = dihydroxyacetone phosphate + NADPH + H(+). It participates in membrane lipid metabolism; glycerophospholipid metabolism. Its function is as follows. Catalyzes the reduction of the glycolytic intermediate dihydroxyacetone phosphate (DHAP) to sn-glycerol 3-phosphate (G3P), the key precursor for phospholipid synthesis. The protein is Glycerol-3-phosphate dehydrogenase [NAD(P)+] of Acinetobacter baumannii (strain SDF).